We begin with the raw amino-acid sequence, 372 residues long: Cytochrome b (372 aa).

4 consecutive transmembrane segments (helical) span residues 25-45 (FGSM…FLAI), 69-90 (WIMQ…YIHI), 105-125 (WLSG…GYVL), and 170-190 (FFAL…IHII). Heme b-binding residues include histidine 75 and histidine 89. Heme b is bound by residues histidine 174 and histidine 188. Histidine 193 lines the a ubiquinone pocket. The next 4 helical transmembrane spans lie at 218–238 (YKDM…LSFL), 280–300 (LGGT…PFTH), 312–332 (LSQT…WTAT), and 339–358 (FITI…IMTP).

The protein belongs to the cytochrome b family. In terms of assembly, the cytochrome bc1 complex contains 3 respiratory subunits (MT-CYB, CYC1 and UQCRFS1), 2 core proteins (UQCRC1 and UQCRC2) and probably 6 low-molecular weight proteins. Heme b is required as a cofactor.

Its subcellular location is the mitochondrion inner membrane. Functionally, component of the ubiquinol-cytochrome c reductase complex (complex III or cytochrome b-c1 complex) that is part of the mitochondrial respiratory chain. The b-c1 complex mediates electron transfer from ubiquinol to cytochrome c. Contributes to the generation of a proton gradient across the mitochondrial membrane that is then used for ATP synthesis. In Aspidelaps scutatus (Shield-nose snake), this protein is Cytochrome b (MT-CYB).